The primary structure comprises 101 residues: Protein translation factor SUI1 homolog (101 aa).

Belongs to the SUI1 family.

This is Protein translation factor SUI1 homolog from Methanosphaera stadtmanae (strain ATCC 43021 / DSM 3091 / JCM 11832 / MCB-3).